Here is a 371-residue protein sequence, read N- to C-terminus: Cysteine proteinase EP-B 1 (371 aa).

Residues 1 to 28 (MGLLSKKLLVASMVAAVLAVAAVELCSA) form the signal peptide. Residues 29–133 (IPMEDKDLES…FMYAALNVSD (105 aa)) constitute a propeptide, activation peptide. N-linked (GlcNAc...) asparagine glycosylation occurs at Asn-130. 3 disulfides stabilise this stretch: Cys-155-Cys-197, Cys-189-Cys-230, and Cys-291-Cys-343. The active site involves Cys-158. Residues His-297 and Asn-318 contribute to the active site.

It belongs to the peptidase C1 family.

The chain is Cysteine proteinase EP-B 1 from Hordeum vulgare (Barley).